We begin with the raw amino-acid sequence, 1167 residues long: Rhoptry neck protein 2-like protein 2 (1167 aa).

The signal sequence occupies residues 1 to 20; sequence MSSNLAFLSLSLAESTASLG. The Cytoplasmic segment spans residues 21-977; the sequence is KSLEETRTRL…WVAKRSRSRK (957 aa). The tract at residues 55 to 94 is disordered; that stretch reads GPGLSVEGKQTEQMSRKSAEDTRASSLSSDPDDGRAAQLA. A compositionally biased stretch (basic and acidic residues) spans 68 to 77; it reads MSRKSAEDTR. The chain crosses the membrane as a helical span at residues 978–998; that stretch reads LAIVSVLSLGLIFAYTLLSAL. Residues 999-1167 lie on the Extracellular side of the membrane; that stretch reads DIAQFLTDSG…TPQRAQDGSR (169 aa). The cysteines at positions 1015 and 1026 are disulfide-linked.

This sequence belongs to the apicomplexan parasites RON2 family.

Its subcellular location is the secreted. The protein localises to the host cell membrane. May play a role in host cell invasion. This Toxoplasma gondii (strain ATCC 50611 / Me49) protein is Rhoptry neck protein 2-like protein 2 (RON2L2).